Here is a 422-residue protein sequence, read N- to C-terminus: Histidine--tRNA ligase (422 aa).

The protein belongs to the class-II aminoacyl-tRNA synthetase family. As to quaternary structure, homodimer.

It is found in the cytoplasm. The enzyme catalyses tRNA(His) + L-histidine + ATP = L-histidyl-tRNA(His) + AMP + diphosphate + H(+). This chain is Histidine--tRNA ligase, found in Vibrio parahaemolyticus serotype O3:K6 (strain RIMD 2210633).